The sequence spans 279 residues: Thymidylate synthase (279 aa).

A dUMP-binding site is contributed by 133–134; it reads RR. Catalysis depends on Cys154, which acts as the Nucleophile. DUMP is bound by residues 178–181, Asn189, and 219–221; these read RSND and HIY. Asp181 serves as a coordination point for (6R)-5,10-methylene-5,6,7,8-tetrahydrofolate. Residue Ala278 coordinates (6R)-5,10-methylene-5,6,7,8-tetrahydrofolate.

The protein belongs to the thymidylate synthase family. Bacterial-type ThyA subfamily. In terms of assembly, homodimer.

The protein localises to the cytoplasm. The catalysed reaction is dUMP + (6R)-5,10-methylene-5,6,7,8-tetrahydrofolate = 7,8-dihydrofolate + dTMP. It participates in pyrimidine metabolism; dTTP biosynthesis. In terms of biological role, catalyzes the reductive methylation of 2'-deoxyuridine-5'-monophosphate (dUMP) to 2'-deoxythymidine-5'-monophosphate (dTMP) while utilizing 5,10-methylenetetrahydrofolate (mTHF) as the methyl donor and reductant in the reaction, yielding dihydrofolate (DHF) as a by-product. This enzymatic reaction provides an intracellular de novo source of dTMP, an essential precursor for DNA biosynthesis. The polypeptide is Thymidylate synthase (Streptococcus pyogenes serotype M6 (strain ATCC BAA-946 / MGAS10394)).